The chain runs to 64 residues: uncharacterized protein (64 aa).

This is an uncharacterized protein from Methanothermobacter thermautotrophicus (strain ATCC 29096 / DSM 1053 / JCM 10044 / NBRC 100330 / Delta H) (Methanobacterium thermoautotrophicum).